Reading from the N-terminus, the 252-residue chain is MYLVEEAKKVAEMILSSVNAIAFTGAGISTASGIPDFRGPQGLWKKYSPELASIEYFQKYPDAFWQFYSTRMKSLFEAKPNRAHYALAQLEKMGLIKAVITQNVDGLHSVAGSRNVIELHGNMRKSYCTSCLRSYDSLEVLARVEKGEVIPRCECGGILKPDVVLFGEPVHGIYEAMRIANESDLVLAIGSSLTVYPANQIPLIVKRNGGGLIILNGEETPYDEYADLVIRERIEIFLPEVISHIQSLHRSS.

Positions 1-248 (MYLVEEAKKV…PEVISHIQSL (248 aa)) constitute a Deacetylase sirtuin-type domain. NAD(+) is bound by residues alanine 26, threonine 30, phenylalanine 37, arginine 38, glutamine 102, valine 104, aspartate 105, and histidine 120. Residue phenylalanine 37 coordinates nicotinamide. Valine 104 and aspartate 105 together coordinate nicotinamide. The active-site Proton acceptor is histidine 120. Zn(2+) contacts are provided by cysteine 128, cysteine 131, cysteine 153, and cysteine 155. Residues serine 191, serine 192, asparagine 216, and isoleucine 234 each coordinate NAD(+).

The protein belongs to the sirtuin family. Class U subfamily. Zn(2+) is required as a cofactor.

The protein resides in the cytoplasm. The enzyme catalyses N(6)-acetyl-L-lysyl-[protein] + NAD(+) + H2O = 2''-O-acetyl-ADP-D-ribose + nicotinamide + L-lysyl-[protein]. In terms of biological role, NAD-dependent protein deacetylase which modulates the activities of several enzymes which are inactive in their acetylated form. Deacetylates the N-terminal lysine residue of Alba, the major archaeal chromatin protein and that, in turn, increases Alba's DNA binding affinity, thereby repressing transcription. In Sulfolobus acidocaldarius (strain ATCC 33909 / DSM 639 / JCM 8929 / NBRC 15157 / NCIMB 11770), this protein is NAD-dependent protein deacetylase.